We begin with the raw amino-acid sequence, 346 residues long: MAMVSEFLKQAWFIENEEQEYIKTVKGSKGGPGSAVSPYPTFNPSSDVEALHKAITVKGVDEATIIEILTKRNNAQRQQIKAAYLQEKGKPLDEVLKKALLGHLEEVVLALLKTPAQFDAEELRAAMKGLGTDEDTLNEILASRTNREIREINRVYREELKRDLAKDIASDTSGDYEKALLSLAKGDRSEELAVNDDLADSDARALYEAGERRKGTDVNVFITILTTRSYPHLRRVFQKYSKYSKHDMNKVLDLELKGDIEKCLTVIVKCATSQPMFFAEKLHQAMKGIGTRHKTLIRIMVSRSEIDMNDIKACYQKLYGISLCQAILDETKGDYEKILVALCGRD.

The residue at position 2 (Ala-2) is an N-acetylalanine. At Ser-5 the chain carries Phosphoserine; by TRPM7. Gln-19 is covalently cross-linked (Isoglutamyl lysine isopeptide (Gln-Lys) (interchain with K-?)). Residue Tyr-21 is modified to Phosphotyrosine; by EGFR. Residues Ser-34 and Ser-37 each carry the phosphoserine modification. A Phosphothreonine modification is found at Thr-41. Annexin repeat units follow at residues 42–113 (FNPS…ALLK), 114–185 (TPAQ…SLAK), 197–269 (DLAD…VIVK), and 273–344 (SQPM…ALCG). At Lys-58 the chain carries N6-acetyllysine. Ca(2+) is bound by residues Gly-59, Val-60, Glu-62, Lys-97, Leu-100, Glu-105, Met-127, Gly-129, Gly-131, Thr-132, and Glu-134. The residue at position 136 (Thr-136) is a Phosphothreonine. Ca(2+) contacts are provided by Asp-171, Gly-210, and Arg-213. Lys-214 participates in a covalent cross-link: Glycyl lysine isopeptide (Lys-Gly) (interchain with G-Cter in SUMO1); alternate. Lys-214 participates in a covalent cross-link: Glycyl lysine isopeptide (Lys-Gly) (interchain with G-Cter in SUMO2); alternate. A Ca(2+)-binding site is contributed by Gly-215. Lys-239 carries the post-translational modification N6-acetyllysine. Ca(2+) contacts are provided by Asp-253, Glu-255, and Leu-256. A Glycyl lysine isopeptide (Lys-Gly) (interchain with G-Cter in SUMO1) cross-link involves residue Lys-257. Ca(2+)-binding residues include Glu-261, Met-286, Gly-288, and Gly-290. Position 312 is an N6-acetyllysine (Lys-312). The cysteines at positions 324 and 343 are disulfide-linked. Leu-328, Glu-330, and Thr-331 together coordinate Ca(2+). Lys-332 participates in a covalent cross-link: Glycyl lysine isopeptide (Lys-Gly) (interchain with G-Cter in SUMO1). Glu-336 serves as a coordination point for Ca(2+).

The protein belongs to the annexin family. Homodimer; non-covalently linked. Homodimer; linked by transglutamylation. Homodimers linked by transglutamylation are observed in placenta, but not in other tissues. Interacts with S100A11. Heterotetramer, formed by two molecules each of S100A11 and ANXA1. Interacts with DYSF. Interacts with EGFR. Post-translationally, phosphorylated by protein kinase C, EGFR and TRPM7. Phosphorylated in response to EGF treatment. In terms of processing, sumoylated. Proteolytically cleaved by cathepsin CTSG to release the active N-terminal peptide Ac2-26. In terms of tissue distribution, detected on surface epithelia and mucosal glands in nasal cavity, trachea, bronchi and bronchioles. Detected in blood vessel endothelial cells. Detected in neutrophils (at protein level).

Its subcellular location is the nucleus. It is found in the cytoplasm. It localises to the cell projection. The protein resides in the cilium. The protein localises to the basolateral cell membrane. Its subcellular location is the lateral cell membrane. It is found in the cell membrane. It localises to the apical cell membrane. The protein resides in the membrane. The protein localises to the endosome membrane. Its subcellular location is the secreted. It is found in the extracellular space. It localises to the early endosome. The protein resides in the cytoplasmic vesicle membrane. The protein localises to the extracellular exosome. Its subcellular location is the cytoplasmic vesicle. It is found in the secretory vesicle lumen. It localises to the phagocytic cup. Its function is as follows. Plays important roles in the innate immune response as effector of glucocorticoid-mediated responses and regulator of the inflammatory process. Has anti-inflammatory activity. Plays a role in glucocorticoid-mediated down-regulation of the early phase of the inflammatory response. Contributes to the adaptive immune response by enhancing signaling cascades that are triggered by T-cell activation, regulates differentiation and proliferation of activated T-cells. Promotes the differentiation of T-cells into Th1 cells and negatively regulates differentiation into Th2 cells. Has no effect on unstimulated T-cells. Negatively regulates hormone exocytosis via activation of the formyl peptide receptors and reorganization of the actin cytoskeleton. Has high affinity for Ca(2+) and can bind up to eight Ca(2+) ions. Displays Ca(2+)-dependent binding to phospholipid membranes. Plays a role in the formation of phagocytic cups and phagosomes. Plays a role in phagocytosis by mediating the Ca(2+)-dependent interaction between phagosomes and the actin cytoskeleton. Functionally, functions at least in part by activating the formyl peptide receptors and downstream signaling cascades. Promotes chemotaxis of granulocytes and monocytes via activation of the formyl peptide receptors. Promotes rearrangement of the actin cytoskeleton, cell polarization and cell migration. Promotes resolution of inflammation and wound healing. Acts via neutrophil N-formyl peptide receptors to enhance the release of CXCL2. The polypeptide is Annexin A1 (ANXA1) (Bos taurus (Bovine)).